The chain runs to 919 residues: Eukaryotic translation initiation factor 3 subunit C (919 aa).

Residues 1–28 (MSRFFANGSDSESESSEEEVQAPNFNKA) are disordered. Over residues 11–20 (SESESSEEEV) the composition is skewed to acidic residues. Residues serine 34, serine 165, and serine 177 each carry the phosphoserine modification. Positions 154-275 (LSRFRENPQE…EQKIKLRKRA (122 aa)) are disordered. Residues 162–171 (QEESENEDEE) show a composition bias toward acidic residues. A compositionally biased stretch (acidic residues) spans 210–236 (ADDEDSDESIDWDPDTESETESSEDEN). Residues 241–269 (MRERFLKRSTEKDDKDDDKRKDKRKEQKI) are compositionally biased toward basic and acidic residues. One can recognise a PCI domain in the interval 640–816 (FHMHINLELL…ETVVMHRSEP (177 aa)). The segment at 848–919 (FFQRGNMGNR…QQQVQTIDEE (72 aa)) is disordered. Residues 883–894 (QRNRNQRGHHKN) are compositionally biased toward basic residues. Residues 895-919 (QQNQNQQQQQQHQREQQQVQTIDEE) are compositionally biased toward low complexity.

It belongs to the eIF-3 subunit C family. As to quaternary structure, component of the eukaryotic translation initiation factor 3 (eIF-3) complex. The eIF-3 complex interacts with pix.

It localises to the cytoplasm. Functionally, component of the eukaryotic translation initiation factor 3 (eIF-3) complex, which is involved in protein synthesis of a specialized repertoire of mRNAs and, together with other initiation factors, stimulates binding of mRNA and methionyl-tRNAi to the 40S ribosome. The eIF-3 complex specifically targets and initiates translation of a subset of mRNAs involved in cell proliferation. The sequence is that of Eukaryotic translation initiation factor 3 subunit C from Drosophila willistoni (Fruit fly).